The primary structure comprises 94 residues: Dynein light chain, cytoplasmic (94 aa).

This sequence belongs to the dynein light chain family. Homodimer. Cytoplasmic dynein consists of two catalytic heavy chains (HCs) and a number of non-catalytic subunits which present intermediate chains (ICs), light intermediate chains (LICs) and light chains (LCs). Component of the nuclear pore complex (NPC). The nuclear pore complex constitutes the exclusive means of nucleocytoplasmic transport. NPCs allow the passive diffusion of ions and small molecules and the active, nuclear transport receptor-mediated bidirectional transport of macromolecules such as proteins, RNAs, ribonucleoparticles (RNPs), and ribosomal subunits across the nuclear envelope. Due to its 8-fold rotational symmetry, all subunits are present with 8 copies or multiples thereof.

It is found in the cytoplasm. Its subcellular location is the cytoskeleton. The protein resides in the nucleus. The protein localises to the nuclear pore complex. Functionally, acts as one of several non-catalytic accessory components of the cytoplasmic dynein complex that are thought to be involved in linking dynein to cargos and to adapter proteins that regulate dynein function. Cytoplasmic dynein 1 acts as a motor for the intracellular retrograde motility of vesicles and organelles along microtubules. May play a role in changing or maintaining the spatial distribution of cytoskeletal structures. Also a component of the nuclear pore complex. In Emericella nidulans (strain FGSC A4 / ATCC 38163 / CBS 112.46 / NRRL 194 / M139) (Aspergillus nidulans), this protein is Dynein light chain, cytoplasmic (nudG).